A 112-amino-acid polypeptide reads, in one-letter code: Large ribosomal subunit protein mL53 (112 aa).

Belongs to the mitochondrion-specific ribosomal protein mL53 family. In terms of assembly, component of the mitochondrial ribosome large subunit (39S) which comprises a 16S rRNA and about 50 distinct proteins.

The protein localises to the mitochondrion. This Bos taurus (Bovine) protein is Large ribosomal subunit protein mL53 (MRPL53).